A 95-amino-acid polypeptide reads, in one-letter code: Large ribosomal subunit protein eL31 (95 aa).

Belongs to the eukaryotic ribosomal protein eL31 family. Part of the 50S ribosomal subunit.

This is Large ribosomal subunit protein eL31 from Pyrococcus furiosus (strain ATCC 43587 / DSM 3638 / JCM 8422 / Vc1).